A 298-amino-acid chain; its full sequence is Bifunctional protein FolD (298 aa).

NADP(+) is bound by residues 165–167 (GRS), Ser-190, and Ile-231.

This sequence belongs to the tetrahydrofolate dehydrogenase/cyclohydrolase family. Homodimer.

It catalyses the reaction (6R)-5,10-methylene-5,6,7,8-tetrahydrofolate + NADP(+) = (6R)-5,10-methenyltetrahydrofolate + NADPH. It carries out the reaction (6R)-5,10-methenyltetrahydrofolate + H2O = (6R)-10-formyltetrahydrofolate + H(+). It functions in the pathway one-carbon metabolism; tetrahydrofolate interconversion. Functionally, catalyzes the oxidation of 5,10-methylenetetrahydrofolate to 5,10-methenyltetrahydrofolate and then the hydrolysis of 5,10-methenyltetrahydrofolate to 10-formyltetrahydrofolate. The chain is Bifunctional protein FolD from Prochlorococcus marinus (strain MIT 9301).